The sequence spans 365 residues: Protein-glutamate methylesterase/protein-glutamine glutaminase 1 (365 aa).

Residues Lys-4–Arg-121 form the Response regulatory domain. Asp-55 is subject to 4-aspartylphosphate. The interval Ala-138 to Pro-173 is disordered. Positions Ser-158–Ala-172 are enriched in low complexity. The CheB-type methylesterase domain maps to Lys-182 to Val-365. Catalysis depends on residues Ser-189, His-216, and Asp-310.

The protein belongs to the CheB family. Post-translationally, phosphorylated by CheA. Phosphorylation of the N-terminal regulatory domain activates the methylesterase activity.

The protein resides in the cytoplasm. The enzyme catalyses [protein]-L-glutamate 5-O-methyl ester + H2O = L-glutamyl-[protein] + methanol + H(+). It carries out the reaction L-glutaminyl-[protein] + H2O = L-glutamyl-[protein] + NH4(+). Functionally, involved in chemotaxis. Part of a chemotaxis signal transduction system that modulates chemotaxis in response to various stimuli. Catalyzes the demethylation of specific methylglutamate residues introduced into the chemoreceptors (methyl-accepting chemotaxis proteins or MCP) by CheR. Also mediates the irreversible deamidation of specific glutamine residues to glutamic acid. The sequence is that of Protein-glutamate methylesterase/protein-glutamine glutaminase 1 from Saccharophagus degradans (strain 2-40 / ATCC 43961 / DSM 17024).